The sequence spans 178 residues: CCHC-type zinc finger nucleic acid binding protein (178 aa).

N-acetylserine is present on S2. The CCHC-type 1 zinc-finger motif lies at 4 to 21; that stretch reads NECFKCGRSGHWARECPT. The residue at position 8 (K8) is an N6-acetyllysine. R25 and R27 each carry omega-N-methylarginine; by PRMT1. Residues 25–38 form an RNA-binding Arg/Gly-rich region (RGG-box) region; that stretch reads RGRGMRSRGRGGFT. R32 and R34 each carry omega-N-methylarginine. S49 is modified (phosphoserine). CCHC-type zinc fingers lie at residues 52–69, 72–90, 97–114, 118–135, 136–153, and 157–174; these read DICYRCGESGHLAKDCDL, DEACYNCGRGGHIAKDCKE, QCCYNCGKPGHLARDCDH, QKCYSCGEFGHIQKDCTK, VKCYRCGETGHVAINCSK, and VNCYRCGESGHLARECTI. 3 positions are modified to omega-N-methylarginine: D72, G79, and R80.

In terms of assembly, associates with the 40S ribosomal subunit, the 80S ribosome and with polysomes. Arginine methylation by PRMT1 in the Arg/Gly-rich region impedes RNA binding.

It is found in the nucleus. Its subcellular location is the cytoplasm. The protein resides in the endoplasmic reticulum. In terms of biological role, single-stranded DNA-binding protein that preferentially binds to the sterol regulatory element (SRE) sequence 5'-GTGCGGTG-3', and thereby mediates transcriptional repression. Has a role as transactivator of the Myc promoter. Binds single-stranded RNA in a sequence-specific manner. Binds G-rich elements in target mRNA coding sequences. Prevents G-quadruplex structure formation in vitro, suggesting a role in supporting translation by resolving stable structures on mRNAs. The sequence is that of CCHC-type zinc finger nucleic acid binding protein from Mus musculus (Mouse).